Reading from the N-terminus, the 716-residue chain is DNA ligase (716 aa).

Residues 49–53 (DAEYD), 98–99 (SL), and E131 each bind NAD(+). K133 acts as the N6-AMP-lysine intermediate in catalysis. The NAD(+) site is built by R154, E191, K308, and K332. 4 residues coordinate Zn(2+): C437, C439, C461, and C467. A BRCT domain is found at 638–716 (KRHSPIATKT…EDEWLQLIAE (79 aa)).

It belongs to the NAD-dependent DNA ligase family. LigA subfamily. Mg(2+) is required as a cofactor. The cofactor is Mn(2+).

It carries out the reaction NAD(+) + (deoxyribonucleotide)n-3'-hydroxyl + 5'-phospho-(deoxyribonucleotide)m = (deoxyribonucleotide)n+m + AMP + beta-nicotinamide D-nucleotide.. DNA ligase that catalyzes the formation of phosphodiester linkages between 5'-phosphoryl and 3'-hydroxyl groups in double-stranded DNA using NAD as a coenzyme and as the energy source for the reaction. It is essential for DNA replication and repair of damaged DNA. The polypeptide is DNA ligase (Bradyrhizobium sp. (strain BTAi1 / ATCC BAA-1182)).